A 451-amino-acid polypeptide reads, in one-letter code: MRECISIHVGQAGVQIGNACWELYCLEHGIQPDGQMPSDKTIGGGDDSFNTFFSETGAGKHVPRAVFVDLEPTVIDEVRTGTYRQLFHPEQLITGKEDAANNYARGHYTIGKEIIDLVLDRIRKLADQCTGLQGFSVFHSFGGGTGSGFTSLLMERLSVDYGKKSKLEFSIYPAPQVSTAVVEPYNSILTTHTTLEHSDCAFMVDNEAIYDICRRNLDIERPTYTNLNRLIGQIVSSITASLRFDGALNVDLTEFQTNLVPYPRAHFPLATYAPVISAEKAYHEQLSVAEITNACFEPANQMVKCDPRHGKYMACCLLYRGDVVPKDVNAAIATIKTKRTIQFVDWCPTGFKVGINYEPPTVVPGGDLAKVQRAVCMLSNTTAIAEAWARLDHKFDLMYAKRAFVHWYVGEGMEEGEFSEAREDMAALEKDYEEVGVDSVEGEGEEEGEEY.

Glycine 10, glutamine 11, alanine 12, and glutamine 15 together coordinate GTP. At lysine 40 the chain carries N6-acetyllysine. Glutamate 71, alanine 99, serine 140, glycine 143, glycine 144, threonine 145, glycine 146, threonine 179, glutamate 183, asparagine 206, tyrosine 224, asparagine 228, and leucine 252 together coordinate GTP. Glutamate 71 is a binding site for Mg(2+). Glutamate 254 is a catalytic residue. Tyrosine 282 is modified (3'-nitrotyrosine). Phosphoserine is present on serine 439. Residues glutamate 443 and glutamate 445 each carry the 5-glutamyl polyglutamate modification. Position 451 is a 3'-nitrotyrosine (tyrosine 451).

Belongs to the tubulin family. Heterodimer of alpha- and beta-tubulin. A typical microtubule is a hollow water-filled tube with an outer diameter of 25 nm and an inner diameter of 15 nM. Alpha-beta heterodimers associate head-to-tail to form protofilaments running lengthwise along the microtubule wall with the beta-tubulin subunit facing the microtubule plus end conferring a structural polarity. Microtubules usually have 13 protofilaments but different protofilament numbers can be found in some organisms and specialized cells. Interacts with gamma-tubulin; the interaction allows microtubules to nucleate from the gamma-tubulin ring complex (gTuRC). Nascent microtubule interacts (via alpha-tubulin MREC motif) with TTC5/STRAP; this interaction may result in tubulin mRNA-targeted degradation. Component of sperm flagellar doublet microtubules. Mg(2+) serves as cofactor. In terms of processing, some glutamate residues at the C-terminus are polyglycylated, resulting in polyglycine chains on the gamma-carboxyl group. Glycylation is mainly limited to tubulin incorporated into axonemes (cilia and flagella) whereas glutamylation is prevalent in neuronal cells, centrioles, axonemes, and the mitotic spindle. Both modifications can coexist on the same protein on adjacent residues, and lowering polyglycylation levels increases polyglutamylation, and reciprocally. Cilia and flagella glycylation is required for their stability and maintenance. Flagella glycylation controls sperm motility. Some glutamate residues at the C-terminus are polyglutamylated, resulting in polyglutamate chains on the gamma-carboxyl group. Polyglutamylation plays a key role in microtubule severing by spastin (SPAST). SPAST preferentially recognizes and acts on microtubules decorated with short polyglutamate tails: severing activity by SPAST increases as the number of glutamates per tubulin rises from one to eight, but decreases beyond this glutamylation threshold. Glutamylation is also involved in cilia motility. Post-translationally, acetylation of alpha chains at Lys-40 is located inside the microtubule lumen. This modification has been correlated with increased microtubule stability, intracellular transport and ciliary assembly. In terms of processing, methylation of alpha chains at Lys-40 is found in mitotic microtubules and is required for normal mitosis and cytokinesis contributing to genomic stability. Nitration of Tyr-451 is irreversible and interferes with normal dynein intracellular distribution. Post-translationally, undergoes a tyrosination/detyrosination cycle, the cyclic removal and re-addition of a C-terminal tyrosine residue by the enzymes tubulin tyrosine carboxypeptidase (MATCAP1, VASH1 or VASH2) and tubulin tyrosine ligase (TTL), respectively. In terms of processing, tyrosination promotes microtubule interaction with CAP-Gly domain-containing proteins such as CLIP1, CLIP2 and DCTN1. Tyrosination regulates the initiation of dynein-dynactin motility via interaction with DCTN1, which brings the dynein-dynactin complex into contact with microtubules. In neurons, tyrosinated tubulins mediate the initiation of retrograde vesicle transport. Detyrosination is involved in metaphase plate congression by guiding chromosomes during mitosis: detyrosination promotes interaction with CENPE, promoting pole-proximal transport of chromosomes toward the equator. Detyrosination increases microtubules-dependent mechanotransduction in dystrophic cardiac and skeletal muscle. In cardiomyocytes, detyrosinated microtubules are required to resist to contractile compression during contraction: detyrosination promotes association with desmin (DES) at force-generating sarcomeres, leading to buckled microtubules and mechanical resistance to contraction.

The protein localises to the cytoplasm. The protein resides in the cytoskeleton. Its subcellular location is the flagellum axoneme. It catalyses the reaction GTP + H2O = GDP + phosphate + H(+). Its function is as follows. Tubulin is the major constituent of microtubules, protein filaments consisting of alpha- and beta-tubulin heterodimers. Microtubules grow by the addition of GTP-tubulin dimers to the microtubule end, where a stabilizing cap forms. Below the cap, tubulin dimers are in GDP-bound state, owing to GTPase activity of alpha-tubulin. The protein is Tubulin alpha-1A chain (TUBA1A) of Sus scrofa (Pig).